Reading from the N-terminus, the 268-residue chain is MIQIQNTILGKIVDRKHEELADRLKQRNLKDVEQWVKEAPPVRGFAQSLRSKRPGVIAEIKKASPSKGVIRADFNPAEIAQQYEQAGAACLSVLTDVDFFQGADENIAIARQHCSLPALRKDFLIDPYNVVEARALQADCILLIVACLSDQQLEEMSKTAFEYDLDVLVEVHDEQELERALKLSEQCLLGVNNRNLKTFDVDLNTSLRLKKLLDPSRLLVTESGIATPQDVQLMQEHDIHSFLVGESFMKQPRPDQAFTELFGVPKLV.

This sequence belongs to the TrpC family.

It carries out the reaction 1-(2-carboxyphenylamino)-1-deoxy-D-ribulose 5-phosphate + H(+) = (1S,2R)-1-C-(indol-3-yl)glycerol 3-phosphate + CO2 + H2O. It participates in amino-acid biosynthesis; L-tryptophan biosynthesis; L-tryptophan from chorismate: step 4/5. The sequence is that of Indole-3-glycerol phosphate synthase (trpC) from Acinetobacter baylyi (strain ATCC 33305 / BD413 / ADP1).